Consider the following 413-residue polypeptide: uncharacterized protein (413 aa).

Positions 3 to 155 (MEPRVLRREE…SRVRLSVPAG (153 aa)) constitute an N-acetyltransferase domain. Acetyl-CoA-binding positions include 86–88 (VSV), 94–99 (RRGVLT), and 122–123 (SE). Tyr127 serves as the catalytic Proton donor. The active-site Proton acceptor; via carboxylate is Phe413.

It belongs to the acetyltransferase Eis family. Homohexamer; trimer of dimers.

This is an uncharacterized protein from Streptomyces coelicolor (strain ATCC BAA-471 / A3(2) / M145).